A 64-amino-acid chain; its full sequence is Large ribosomal subunit protein bL28 (64 aa).

The interval M1 to K26 is disordered.

Belongs to the bacterial ribosomal protein bL28 family.

In Ureaplasma urealyticum serovar 10 (strain ATCC 33699 / Western), this protein is Large ribosomal subunit protein bL28.